The following is a 153-amino-acid chain: ORM1-like protein 2 (153 aa).

Residues 1–21 are Cytoplasmic-facing; sequence MNVGVAHSEVNPNTRVMNSRG. A run of 2 helical transmembrane segments spans residues 22–42 and 43–63; these read IWLA…SIPF and FSIP…MYIF. The Cytoplasmic segment spans residues 64–105; that stretch reads LHTVKGTPFETPDQGKARLLTHWEQMDYGLQFTSSRKFLSIS. The chain crosses the membrane as a helical span at residues 106 to 126; that stretch reads PIVLYLLASFYTKYDAAHFLI. The Extracellular portion of the chain corresponds to 127 to 153; it reads NTASLLSVLLPKLPQFHGVRLFGINKY.

This sequence belongs to the ORM family. In terms of assembly, ceramide-sensitive subunit of the serine palmitoyltransferase (SPT) complex, which is also composed of SPTLC1, SPTLC2/3 and SPTSSA/B.

It localises to the endoplasmic reticulum membrane. Plays an essential role in the homeostatic regulation of sphingolipid de novo biosynthesis by modulating the activity of the serine palmitoyltransferase (SPT) in response to ceramide levels. When complexed to SPT, the binding of ceramides to its N-terminus stabilizes a conformation that block SPT substrate entry, hence preventing SPT catalytic activity. Through this mechanism, maintains ceramide levels at sufficient concentrations for the production of complex sphingolipids, but which prevents the accumulation of ceramides to levels that trigger apoptosis. This chain is ORM1-like protein 2 (Ormdl2), found in Mus musculus (Mouse).